The primary structure comprises 271 residues: Type III pantothenate kinase (271 aa).

Position 6–13 (6–13 (DVRNTHTV)) interacts with ATP. 109 to 112 (GADR) contributes to the substrate binding site. The active-site Proton acceptor is Asp111. Residue Asp131 participates in K(+) binding. Ser134 contacts ATP. A substrate-binding site is contributed by Thr186.

It belongs to the type III pantothenate kinase family. As to quaternary structure, homodimer. It depends on NH4(+) as a cofactor. Requires K(+) as cofactor.

Its subcellular location is the cytoplasm. It catalyses the reaction (R)-pantothenate + ATP = (R)-4'-phosphopantothenate + ADP + H(+). It functions in the pathway cofactor biosynthesis; coenzyme A biosynthesis; CoA from (R)-pantothenate: step 1/5. Catalyzes the phosphorylation of pantothenate (Pan), the first step in CoA biosynthesis. The chain is Type III pantothenate kinase from Mycobacteroides abscessus (strain ATCC 19977 / DSM 44196 / CCUG 20993 / CIP 104536 / JCM 13569 / NCTC 13031 / TMC 1543 / L948) (Mycobacterium abscessus).